Consider the following 341-residue polypeptide: Anthranilate phosphoribosyltransferase (341 aa).

5-phospho-alpha-D-ribose 1-diphosphate is bound by residues Gly-82, 85–86 (GD), Thr-90, 92–95 (NIST), 110–118 (KHGGRSVSG), and Ser-122. Gly-82 serves as a coordination point for anthranilate. Ser-94 contributes to the Mg(2+) binding site. Arg-168 provides a ligand contact to anthranilate. Positions 227 and 228 each coordinate Mg(2+).

It belongs to the anthranilate phosphoribosyltransferase family. In terms of assembly, homodimer. It depends on Mg(2+) as a cofactor.

The catalysed reaction is N-(5-phospho-beta-D-ribosyl)anthranilate + diphosphate = 5-phospho-alpha-D-ribose 1-diphosphate + anthranilate. The protein operates within amino-acid biosynthesis; L-tryptophan biosynthesis; L-tryptophan from chorismate: step 2/5. In terms of biological role, catalyzes the transfer of the phosphoribosyl group of 5-phosphorylribose-1-pyrophosphate (PRPP) to anthranilate to yield N-(5'-phosphoribosyl)-anthranilate (PRA). This Nitrosomonas europaea (strain ATCC 19718 / CIP 103999 / KCTC 2705 / NBRC 14298) protein is Anthranilate phosphoribosyltransferase.